The chain runs to 465 residues: UDP-N-acetylmuramate--L-alanine ligase (465 aa).

An ATP-binding site is contributed by 112-118 (GTHGKTT).

Belongs to the MurCDEF family.

It localises to the cytoplasm. It carries out the reaction UDP-N-acetyl-alpha-D-muramate + L-alanine + ATP = UDP-N-acetyl-alpha-D-muramoyl-L-alanine + ADP + phosphate + H(+). The protein operates within cell wall biogenesis; peptidoglycan biosynthesis. Cell wall formation. In Burkholderia cenocepacia (strain ATCC BAA-245 / DSM 16553 / LMG 16656 / NCTC 13227 / J2315 / CF5610) (Burkholderia cepacia (strain J2315)), this protein is UDP-N-acetylmuramate--L-alanine ligase.